A 350-amino-acid chain; its full sequence is FAD:protein FMN transferase (350 aa).

The signal sequence occupies residues 1 to 19 (MDMTFFRAALLGACVLLSG). Cys-20 carries the N-palmitoyl cysteine lipid modification. Cys-20 carries S-diacylglycerol cysteine lipidation. Residues Met-41, Trp-78, 119-121 (AMD), and Asp-181 each bind FAD. A Mg(2+)-binding site is contributed by Thr-184. FAD-binding residues include Glu-187 and Ile-272. Mg(2+)-binding residues include Asp-298, Asp-301, and Thr-302.

The protein belongs to the ApbE family. Mg(2+) is required as a cofactor.

Its subcellular location is the cell inner membrane. The enzyme catalyses L-threonyl-[protein] + FAD = FMN-L-threonyl-[protein] + AMP + H(+). Its function is as follows. Flavin transferase that catalyzes the transfer of the FMN moiety of FAD and its covalent binding to the hydroxyl group of a threonine residue in a target flavoprotein such as NqrB and NqrC, two subunits of the NQR complex. The polypeptide is FAD:protein FMN transferase (Klebsiella pneumoniae (strain 342)).